An 863-amino-acid polypeptide reads, in one-letter code: ATP-dependent helicase Lhr-Core protein 2 (863 aa).

F30, Q37, K60, T61, D179, E180, R377, and H380 together coordinate ATP. The Helicase ATP-binding domain occupies 41–234 (VIEIHKGENV…FVFGFNDDGT (194 aa)). The DEAH box signature appears at 179 to 182 (DEVH). Residues 275–424 (RLDELIEQHR…RIKIPQNPLD (150 aa)) form the Helicase C-terminal domain. The WH domain stretch occupies residues 418–512 (IPQNPLDVLV…AIYYMNTGTI (95 aa)). A domain 4 region spans residues 513–863 (PDEAKIEVYT…KIMAMIGELE (351 aa)).

This sequence belongs to the Lhr helicase family. Lhr-Core subfamily. As to quaternary structure, monomer.

It catalyses the reaction ATP + H2O = ADP + phosphate + H(+). Unwinding of dsRNA duplexes is inhibited by AMP-PMP and ATP-gamma-S. A DNA:RNA helicase with a significant strand annealing activity, probably involved in DNA repair and RNA transactions. In vitro has a slow helicase activity with a preference for 3'-overhang duplexes; displaces RNA from 3'-overhang DNA:RNA or RNA:RNA duplexes. 3'-tailed double-stranded (ds)DNA is not unwound. The slow helicase activity on RNA duplexes is ATP-independent. Has strand annealing properties in the absence of ATP; forms 3'-overhang DNA:RNA, 3'-overhang dsRNA and 3'-overhang dsDNA duplexes but not 5'-overhang duplexes. A nucleic acid-dependent ATPase; single-stranded (ss)DNA and RNA are equally stimulatory. Binds ssDNA, RNA, dsDNA and dsRNA duplexes. This is ATP-dependent helicase Lhr-Core protein 2 from Thermococcus barophilus (strain DSM 11836 / MP).